The sequence spans 538 residues: Putative cysteine ligase BshC (538 aa).

Positions Lys-460–Leu-484 form a coiled coil.

The protein belongs to the BshC family.

Its function is as follows. Involved in bacillithiol (BSH) biosynthesis. May catalyze the last step of the pathway, the addition of cysteine to glucosamine malate (GlcN-Mal) to generate BSH. In Bacillus thuringiensis (strain Al Hakam), this protein is Putative cysteine ligase BshC.